A 673-amino-acid polypeptide reads, in one-letter code: eEF1A lysine and N-terminal methyltransferase homolog (673 aa).

Belongs to the methyltransferase superfamily.

The enzyme catalyses L-lysyl-[protein] + S-adenosyl-L-methionine = N(6)-methyl-L-lysyl-[protein] + S-adenosyl-L-homocysteine + H(+). It carries out the reaction N(6)-methyl-L-lysyl-[protein] + S-adenosyl-L-methionine = N(6),N(6)-dimethyl-L-lysyl-[protein] + S-adenosyl-L-homocysteine + H(+). The catalysed reaction is N-terminal glycyl-L-lysyl-L-glutamyl-[protein] + 3 S-adenosyl-L-methionine = N-terminal N,N,N-trimethyl-glycyl-L-lysyl-L-glutamyl-[protein] + 3 S-adenosyl-L-homocysteine + 3 H(+). Functionally, dual methyltransferase. It catalyzes N-terminal methylation of target proteins via its C-terminus. It catalyzes dimethylation on lysine residues of target proteins via its N-terminus. The sequence is that of eEF1A lysine and N-terminal methyltransferase homolog from Drosophila pseudoobscura pseudoobscura (Fruit fly).